Reading from the N-terminus, the 298-residue chain is Transcription factor RAX2 (298 aa).

HTH myb-type domains are found at residues 9-62 (KANV…LNYL) and 63-117 (RPNI…KKKL). 2 consecutive DNA-binding regions (H-T-H motif) follow at residues 38–62 (WIALPHKAGLRRCGKSCRLRWLNYL) and 90–113 (WSVIAAHLQGRTDNDIKNYWNTKL).

Ubiquitous, with higher levels in roots, flowers, and shoot tips. Found in all cells of the shoot tips.

Its subcellular location is the nucleus. Functionally, transcription activator. Positively regulates axillary meristems (AMs) formation and development, especially during inflorescence. The polypeptide is Transcription factor RAX2 (RAX2) (Arabidopsis thaliana (Mouse-ear cress)).